Reading from the N-terminus, the 264-residue chain is S-adenosylmethionine decarboxylase proenzyme (264 aa).

Ser112 serves as the catalytic Schiff-base intermediate with substrate; via pyruvic acid. Residue Ser112 is modified to Pyruvic acid (Ser); by autocatalysis. His117 serves as the catalytic Proton acceptor; for processing activity. Cys140 (proton donor; for catalytic activity) is an active-site residue.

The protein belongs to the prokaryotic AdoMetDC family. Type 2 subfamily. In terms of assembly, heterooctamer of four alpha and four beta chains arranged as a tetramer of alpha/beta heterodimers. The cofactor is pyruvate. Post-translationally, is synthesized initially as an inactive proenzyme. Formation of the active enzyme involves a self-maturation process in which the active site pyruvoyl group is generated from an internal serine residue via an autocatalytic post-translational modification. Two non-identical subunits are generated from the proenzyme in this reaction, and the pyruvate is formed at the N-terminus of the alpha chain, which is derived from the carboxyl end of the proenzyme. The post-translation cleavage follows an unusual pathway, termed non-hydrolytic serinolysis, in which the side chain hydroxyl group of the serine supplies its oxygen atom to form the C-terminus of the beta chain, while the remainder of the serine residue undergoes an oxidative deamination to produce ammonia and the pyruvoyl group blocking the N-terminus of the alpha chain.

It catalyses the reaction S-adenosyl-L-methionine + H(+) = S-adenosyl 3-(methylsulfanyl)propylamine + CO2. It participates in amine and polyamine biosynthesis; S-adenosylmethioninamine biosynthesis; S-adenosylmethioninamine from S-adenosyl-L-methionine: step 1/1. Catalyzes the decarboxylation of S-adenosylmethionine to S-adenosylmethioninamine (dcAdoMet), the propylamine donor required for the synthesis of the polyamines spermine and spermidine from the diamine putrescine. This Serratia proteamaculans (strain 568) protein is S-adenosylmethionine decarboxylase proenzyme.